We begin with the raw amino-acid sequence, 419 residues long: Creatine kinase S-type, mitochondrial (419 aa).

A mitochondrion-targeting transit peptide spans 1–39 (MASIFSKLLTGRNASLLFATMGTSVLTTGYLLNRQKVCA). The cardiolipin-binding stretch occupies residues 40-64 (EVREQPRLFPPSADYPDLRKHNNCM). The region spanning 46–132 (RLFPPSADYP…FDPVIKLRHN (87 aa)) is the Phosphagen kinase N-terminal domain. The 243-residue stretch at 159 to 401 (YVLSSRVRTG…NYLVDCEKKL (243 aa)) folds into the Phosphagen kinase C-terminal domain. Residues 162–166 (SSRVR) and histidine 225 contribute to the ATP site. Tyrosine 255 is modified (phosphotyrosine). ATP is bound by residues arginine 270, arginine 326, 354 to 359 (RGTGGV), and aspartate 369. Threonine 356 carries the phosphothreonine modification.

It belongs to the ATP:guanido phosphotransferase family. Exists as an octamer composed of four CKMT2 homodimers. As to expression, sarcomere-specific. Found only in heart and skeletal muscles.

The protein resides in the mitochondrion inner membrane. It catalyses the reaction creatine + ATP = N-phosphocreatine + ADP + H(+). In terms of biological role, reversibly catalyzes the transfer of phosphate between ATP and various phosphogens (e.g. creatine phosphate). Creatine kinase isoenzymes play a central role in energy transduction in tissues with large, fluctuating energy demands, such as skeletal muscle, heart, brain and spermatozoa. This chain is Creatine kinase S-type, mitochondrial (CKMT2), found in Homo sapiens (Human).